We begin with the raw amino-acid sequence, 453 residues long: Malate dehydrogenase [NADP], chloroplastic (453 aa).

A chloroplast-targeting transit peptide spans methionine 1 to cysteine 68. Cysteines 88 and 93 form a disulfide. Glycine 117–serine 123 serves as a coordination point for NADP(+). 2 residues coordinate substrate: arginine 198 and arginine 204. NADP(+) is bound by residues asparagine 211, glutamine 218, and valine 235–asparagine 237. The substrate site is built by asparagine 237 and arginine 268. The active-site Proton acceptor is the histidine 293. A disulfide bridge connects residues cysteine 429 and cysteine 441.

It belongs to the LDH/MDH superfamily. MDH type 2 family. Homodimer.

The protein resides in the plastid. It localises to the chloroplast. It carries out the reaction (S)-malate + NADP(+) = oxaloacetate + NADPH + H(+). Its activity is regulated as follows. Chloroplast NADP-MDH is activated upon illumination. In order to be enzymatically active, disulfide bridges on the protein must be reduced by thioredoxin which receives electrons from ferredoxin and the electron transport system of photosynthesis. Its function is as follows. The chloroplastic, NADP-dependent form is essential for the photosynthesis C4 cycle, which allows plants to circumvent the problem of photorespiration. In C4 plants, NADP-MDH activity acts to convert oxaloacetate to malate in chloroplasts of mesophyll cells for transport to the bundle sheath cells. This Flaveria bidentis (Coastal plain yellowtops) protein is Malate dehydrogenase [NADP], chloroplastic.